The sequence spans 526 residues: GMP synthase [glutamine-hydrolyzing] (526 aa).

In terms of domain architecture, Glutamine amidotransferase type-1 spans 9–208; it reads RILILDFGSQ…VKDICGCECL (200 aa). Residue cysteine 86 is the Nucleophile of the active site. Residues histidine 182 and glutamate 184 contribute to the active site. A GMPS ATP-PPase domain is found at 209–401; sequence WTPATIIDDA…LGLPYDMLYR (193 aa). 236–242 contacts ATP; it reads SGGVDSS.

In terms of assembly, homodimer.

The catalysed reaction is XMP + L-glutamine + ATP + H2O = GMP + L-glutamate + AMP + diphosphate + 2 H(+). Its pathway is purine metabolism; GMP biosynthesis; GMP from XMP (L-Gln route): step 1/1. Catalyzes the synthesis of GMP from XMP. The sequence is that of GMP synthase [glutamine-hydrolyzing] from Aeromonas salmonicida (strain A449).